The following is a 713-amino-acid chain: Cadherin-13 (713 aa).

Residues 1 to 22 (MQPRTPLVLCVLLSQVLLLTSA) form the signal peptide. Positions 23–138 (EDLDCIPGFQ…RTSPVPRQKR (116 aa)) are excised as a propeptide. Asparagine 52 and asparagine 86 each carry an N-linked (GlcNAc...) asparagine glycan. Cadherin domains are found at residues 139 to 245 (SIVV…RPIF), 246 to 363 (REGP…SPKF), 364 to 477 (TKKE…GPVF), 478 to 585 (YPDP…APFI), and 584 to 690 (FIYP…VDSN). Asparagine 382, asparagine 489, asparagine 500, asparagine 530, asparagine 598, asparagine 638, and asparagine 671 each carry an N-linked (GlcNAc...) asparagine glycan. Asparagine 690 carries the GPI-anchor amidated asparagine lipid modification. Residues 691–713 (AVGALRFSLPSLLLLSLFSLACL) constitute a propeptide, removed in mature form.

As to quaternary structure, by contrast to classical cadherins, homodimerization in trans is not mediated by cadherin EC1 domain strand-swapping, but instead through a homophilic adhesive interface which joins two elongated EC1-EC2 domains through a region near their Ca2+-binding sites to form a tetrahedral, X-like shape.

It is found in the cell membrane. Its subcellular location is the cytoplasm. Its function is as follows. Cadherins are calcium-dependent cell adhesion proteins. They preferentially interact with themselves in a homophilic manner in connecting cells; cadherins may thus contribute to the sorting of heterogeneous cell types. May act as a negative regulator of neural cell growth. The sequence is that of Cadherin-13 (CDH13) from Pongo abelii (Sumatran orangutan).